The sequence spans 999 residues: MEPGKRRTKDDTWKADDLRKHLKVQSGSPKEEKKLREKKAHKDSESAAPEYREHKSRDPDREARHKEKTAERDLYTSTEHPRGERDRERHKERRKDAKDREKDKLKERHRDQEAEKAHSRGKDREREKDRRARKEEIRQSMAYHDLLSRDMRGRQMAEKVEKKASKIRTEERERRDEDSERIDEDRERRYRERKLQYGDSKEHPLSYWLYKEDGEKKHRKAKDADREKRLREKSSMREKRERHAREKGSSLSDREVEDRHREKRHKEGLHYDDERRRSHADKKERSSKEEHKKRELKELEKEDNDLEATGPDEYLPNLEDDFVDYEDDFEVCDGDDDSNNEHEAREKAEELPLAQKREIQEIQKAISAENERVGELSLKMFQKQGWTEYTKEPWTDANDSPSRTPVCGIFVDFATASHRQKSRSQALKQKTRSSKLLRLIDLDFSFTFSLLDLPPVNEYDMYIRNFGKKNTKQAYVQYNEDNVERDIQTEDIETREVWTQHPGEGTAVSGGSEEKDFSDVTVVPKIDTPRLANFLRAACQVVAVLLEEDRLAAGPSWIPRAQDKALNISDSSSQLNTSLPFLQSRKVSCLHASRVQRQTVVSVHDLPEKAFAPSLDSRHLLCVWDIWQPSGPQKVLICESKVTCCCFSPLKAFLLFAGTVHGSVVVWDLREDSRIHHYVRLSNCFWAFRTPTFSTDGILTSVNHRSPLQAIEPVATSAYKKQSFVLSPFSTQEEMAGLSFHIASLDETGVLNVWVVVELPKADISGSMSDLGLIPGGRIKLVHSTVIQLGNSLSHKDSELWGSTQTLSVKFLPSDPNHFVVGTDMGLISHSTRQDWRVSPRVFKPEQHGVRPIKVNVIDFSPFEETVFLAGCSDGSIRLHQLTSERPIMQWDNSTSGHAVTSLQWSPTRPAVFLVQDDASRIYVWDLLENDLGPVAQQPISPDKLVAMTIVGEPEKTSGSFVALVLARTSGTVDVQNLKRRWTTPAVDEHSQLRLLLQK.

4 stretches are compositionally biased toward basic and acidic residues: residues 1-19, 29-138, 146-260, and 268-300; these read MEPG…DDLR, PKEE…EEIR, LLSR…EDRH, and GLHY…KELE. Residues 1-350 are disordered; the sequence is MEPGKRRTKD…EHEAREKAEE (350 aa). Serine 250 carries the post-translational modification Phosphoserine. Over residues 318-338 the composition is skewed to acidic residues; that stretch reads LEDDFVDYEDDFEVCDGDDDS. The span at 339 to 350 shows a compositional bias: basic and acidic residues; it reads NNEHEAREKAEE. Residues 416-495 form a binding to the DYNLT2B-DYNLT1/DYNLT3 dimer region; that stretch reads ASHRQKSRSQ…DIQTEDIETR (80 aa). 4 WD repeats span residues 637–677, 718–764, 850–890, and 895–935; these read ICES…RIHH, AYKK…KADI, VRPI…PIMQ, and TSGH…LGPV.

The protein belongs to the dynein light intermediate chain family. Intermediate chain of the cytoplasmic dynein complex 2, a multisubunit complex, composed at least of eleven different proteins. The cytoplasmic dynein 2 complex consists of two catalytic heavy chains (HCs) and a number of non-catalytic subunits presented by intermediate chains (ICs), light intermediate chains (LICs) and light chains (LCs). Among them, a heavy chain (DYNC2H1), two intermediate chains (DYNC2I2 and DYNC2I1), a light intermediate chain (DYNC2LI1), and a light chain (DYNLT2B) are unique to the cytoplasmic dynein complex 2, but a subset of the light chains are also shared by dynein-1 and dynein-2 complexes. Interacts with DYNC2I2; their C-terminal domains each bind a copy of the heavy chain, and their extended N-terminal regions are held together by an array of light chain dimers. Interacts with DYNLT2B. Interacts (via the N-terminal half) with DYNLT2B-DYNLT1 dimer or with DYNLT2B-DYNLT3 dimer; this interaction is crucial for retrograde trafficking of ciliary proteins.

It localises to the cell projection. The protein localises to the cilium. The protein resides in the cytoplasm. Its subcellular location is the cytoskeleton. It is found in the microtubule organizing center. It localises to the centrosome. In terms of biological role, acts as one of several non-catalytic accessory components of the cytoplasmic dynein 2 complex (dynein-2 complex), a motor protein complex that drives the movement of cargos along microtubules within cilia and flagella in concert with the intraflagellar transport (IFT) system. DYNC2I1 plays a major role in retrograde ciliary protein trafficking in cilia and flagella. Also requires to maintain a functional transition zone. This chain is Cytoplasmic dynein 2 intermediate chain 1 (Dync2i1), found in Mus musculus (Mouse).